Here is a 1236-residue protein sequence, read N- to C-terminus: ESX-4 secretion system protein EccC4 (1236 aa).

Helical transmembrane passes span 32-52 (LLPV…FLPG) and 59-79 (PTFL…AVTG). FtsK domains lie at 407-607 (GTAV…SESR), 747-936 (RVPL…ADSE), and 1018-1201 (GQPV…DEGA). Residues 430-437 (GATGSGKS), 765-772 (GAPQTGKS), and 1035-1042 (GDNECGKT) each bind ATP.

As to quaternary structure, part of the ESX-4 / type VII secretion system (T7SS), which is composed of cytosolic and membrane components.

It is found in the cell membrane. This is ESX-4 secretion system protein EccC4 (eccC4) from Mycobacterium tuberculosis (strain ATCC 25618 / H37Rv).